Reading from the N-terminus, the 202-residue chain is Ribonuclease HII (202 aa).

One can recognise an RNase H type-2 domain in the interval 1-195; the sequence is MIVAGVDEVG…PELKGGSPAG (195 aa). Residues aspartate 7, glutamate 8, and aspartate 103 each contribute to the a divalent metal cation site.

The protein belongs to the RNase HII family. Mn(2+) serves as cofactor. It depends on Mg(2+) as a cofactor.

The protein localises to the cytoplasm. The catalysed reaction is Endonucleolytic cleavage to 5'-phosphomonoester.. Its function is as follows. Endonuclease that specifically degrades the RNA of RNA-DNA hybrids. In Synechococcus sp. (strain RCC307), this protein is Ribonuclease HII.